A 196-amino-acid polypeptide reads, in one-letter code: Histone H1.0-B (196 aa).

Disordered regions lie at residues 1–29 (MAEN…PKYS) and 86–196 (GVGA…GRKK). The H15 domain maps to 24–97 (DHPKYSDMIL…GASGSFRLAK (74 aa)). A compositionally biased stretch (basic residues) spans 104–196 (PAKKPKKEIK…ASPKKSGRKK (93 aa)).

Belongs to the histone H1/H5 family.

It is found in the nucleus. Its subcellular location is the chromosome. Histones H1 are necessary for the condensation of nucleosome chains into higher-order structures. The histones H1.0 are found in cells that are in terminal stages of differentiation or that have low rates of cell division. This chain is Histone H1.0-B (h1-0-b), found in Xenopus laevis (African clawed frog).